The sequence spans 312 residues: Methionyl-tRNA formyltransferase (312 aa).

Residue 117 to 120 coordinates (6S)-5,6,7,8-tetrahydrofolate; that stretch reads SLLP.

This sequence belongs to the Fmt family.

The enzyme catalyses L-methionyl-tRNA(fMet) + (6R)-10-formyltetrahydrofolate = N-formyl-L-methionyl-tRNA(fMet) + (6S)-5,6,7,8-tetrahydrofolate + H(+). Functionally, attaches a formyl group to the free amino group of methionyl-tRNA(fMet). The formyl group appears to play a dual role in the initiator identity of N-formylmethionyl-tRNA by promoting its recognition by IF2 and preventing the misappropriation of this tRNA by the elongation apparatus. In Bordetella parapertussis (strain 12822 / ATCC BAA-587 / NCTC 13253), this protein is Methionyl-tRNA formyltransferase.